The sequence spans 282 residues: 5'-nucleotidase SurE (282 aa).

A divalent metal cation contacts are provided by aspartate 12, aspartate 13, serine 43, and asparagine 98.

The protein belongs to the SurE nucleotidase family. The cofactor is a divalent metal cation.

The protein resides in the cytoplasm. The enzyme catalyses a ribonucleoside 5'-phosphate + H2O = a ribonucleoside + phosphate. Functionally, nucleotidase that shows phosphatase activity on nucleoside 5'-monophosphates. The polypeptide is 5'-nucleotidase SurE (Hyperthermus butylicus (strain DSM 5456 / JCM 9403 / PLM1-5)).